A 617-amino-acid polypeptide reads, in one-letter code: Proline--tRNA ligase (617 aa).

It belongs to the class-II aminoacyl-tRNA synthetase family. ProS type 1 subfamily. Homodimer.

The protein resides in the cytoplasm. It carries out the reaction tRNA(Pro) + L-proline + ATP = L-prolyl-tRNA(Pro) + AMP + diphosphate. Functionally, catalyzes the attachment of proline to tRNA(Pro) in a two-step reaction: proline is first activated by ATP to form Pro-AMP and then transferred to the acceptor end of tRNA(Pro). As ProRS can inadvertently accommodate and process non-cognate amino acids such as alanine and cysteine, to avoid such errors it has two additional distinct editing activities against alanine. One activity is designated as 'pretransfer' editing and involves the tRNA(Pro)-independent hydrolysis of activated Ala-AMP. The other activity is designated 'posttransfer' editing and involves deacylation of mischarged Ala-tRNA(Pro). The misacylated Cys-tRNA(Pro) is not edited by ProRS. This Streptococcus pneumoniae (strain Hungary19A-6) protein is Proline--tRNA ligase.